We begin with the raw amino-acid sequence, 417 residues long: 4-hydroxy-3-methylbut-2-en-1-yl diphosphate synthase (flavodoxin) (417 aa).

Residues Cys-307, Cys-310, Cys-353, and Glu-360 each coordinate [4Fe-4S] cluster.

It belongs to the IspG family. [4Fe-4S] cluster is required as a cofactor.

The catalysed reaction is (2E)-4-hydroxy-3-methylbut-2-enyl diphosphate + oxidized [flavodoxin] + H2O + 2 H(+) = 2-C-methyl-D-erythritol 2,4-cyclic diphosphate + reduced [flavodoxin]. Its pathway is isoprenoid biosynthesis; isopentenyl diphosphate biosynthesis via DXP pathway; isopentenyl diphosphate from 1-deoxy-D-xylulose 5-phosphate: step 5/6. Functionally, converts 2C-methyl-D-erythritol 2,4-cyclodiphosphate (ME-2,4cPP) into 1-hydroxy-2-methyl-2-(E)-butenyl 4-diphosphate. The polypeptide is 4-hydroxy-3-methylbut-2-en-1-yl diphosphate synthase (flavodoxin) (Xylella fastidiosa (strain 9a5c)).